Consider the following 367-residue polypeptide: Folliculin-like protein bhd1 (367 aa).

Disordered regions lie at residues 41–75 and 92–115; these read RSIG…QSST and SKGP…SPIS. The segment covering 54-64 has biased composition (basic and acidic residues); that stretch reads EAFKNELDNRN. Composition is skewed to polar residues over residues 65-75 and 99-115; these read NADSQSLQSST and RVNS…SPIS. The uDENN FLCN/SMCR8-type domain occupies 131 to 302; it reads FSVPDVQPRL…SNIGTAPSYE (172 aa).

This sequence belongs to the folliculin family.

Its subcellular location is the nucleus. The protein resides in the cytoplasm. This chain is Folliculin-like protein bhd1 (bhd1), found in Schizosaccharomyces pombe (strain 972 / ATCC 24843) (Fission yeast).